Reading from the N-terminus, the 128-residue chain is Small ribosomal subunit protein uS11 (128 aa).

The protein belongs to the universal ribosomal protein uS11 family. Part of the 30S ribosomal subunit. Interacts with proteins S7 and S18. Binds to IF-3.

Functionally, located on the platform of the 30S subunit, it bridges several disparate RNA helices of the 16S rRNA. Forms part of the Shine-Dalgarno cleft in the 70S ribosome. In Porphyromonas gingivalis (strain ATCC BAA-308 / W83), this protein is Small ribosomal subunit protein uS11.